Consider the following 85-residue polypeptide: U4-theraphotoxin-Hhn1a (85 aa).

A signal peptide spans 1 to 22; the sequence is MKMTLIAILTCAAVLVLHTTAA. Residues 23-48 constitute a propeptide that is removed on maturation; sequence EELEAESQLMEVGMPDTELEAVDEER. Intrachain disulfides connect cysteine 52-cysteine 66, cysteine 56-cysteine 77, and cysteine 71-cysteine 82.

It belongs to the neurotoxin 12 (Hwtx-2) family. 02 (Hwtx-2) subfamily. In terms of assembly, monomer. In terms of tissue distribution, expressed by the venom gland.

Its subcellular location is the secreted. Neurotoxin active on both insects and mammals. The protein is U4-theraphotoxin-Hhn1a of Cyriopagopus hainanus (Chinese bird spider).